The following is a 439-amino-acid chain: Ornithine aminotransferase, mitochondrial (439 aa).

A mitochondrion-targeting transit peptide spans 1–25; it reads MLSKLASLQTIAALRRGVHTSVASA. 2 positions are modified to N6-acetyllysine: lysine 49 and lysine 66. N6-succinyllysine is present on lysine 102. N6-acetyllysine; alternate is present on lysine 107. At lysine 107 the chain carries N6-succinyllysine; alternate. Lysine 292 bears the N6-(pyridoxal phosphate)lysine mark. Lysine 362 carries the N6-acetyllysine; alternate modification. The residue at position 362 (lysine 362) is an N6-succinyllysine; alternate. N6-acetyllysine is present on residues lysine 386 and lysine 392. At lysine 405 the chain carries N6-acetyllysine; alternate. Lysine 405 is modified (N6-succinyllysine; alternate). Residue lysine 421 is modified to N6-acetyllysine.

It belongs to the class-III pyridoxal-phosphate-dependent aminotransferase family. In terms of assembly, homohexamer. The cofactor is pyridoxal 5'-phosphate.

It localises to the mitochondrion matrix. It catalyses the reaction L-ornithine + 2-oxoglutarate = L-glutamate 5-semialdehyde + L-glutamate. The protein operates within amino-acid biosynthesis; L-proline biosynthesis; L-glutamate 5-semialdehyde from L-ornithine: step 1/1. In terms of biological role, catalyzes the reversible interconversion of L-ornithine and 2-oxoglutarate to L-glutamate semialdehyde and L-glutamate. In Mus musculus (Mouse), this protein is Ornithine aminotransferase, mitochondrial (Oat).